The sequence spans 201 residues: Small ribosomal subunit protein uS4c (201 aa).

The disordered stretch occupies residues 20–44 (GLTSKRPRAGSDLRNQSRSGKKSQY). One can recognise an S4 RNA-binding domain in the interval 89–152 (MRLDNILFRL…NSRTLVQNLL (64 aa)).

This sequence belongs to the universal ribosomal protein uS4 family. Part of the 30S ribosomal subunit. Contacts protein S5. The interaction surface between S4 and S5 is involved in control of translational fidelity.

It localises to the plastid. It is found in the chloroplast. Its function is as follows. One of the primary rRNA binding proteins, it binds directly to 16S rRNA where it nucleates assembly of the body of the 30S subunit. With S5 and S12 plays an important role in translational accuracy. The polypeptide is Small ribosomal subunit protein uS4c (rps4) (Arabis hirsuta (Hairy rock-cress)).